The primary structure comprises 485 residues: Glutamyl-tRNA(Gln) amidotransferase subunit A (485 aa).

Residues lysine 82 and serine 157 each act as charge relay system in the active site. Serine 181 (acyl-ester intermediate) is an active-site residue.

Belongs to the amidase family. GatA subfamily. Heterotrimer of A, B and C subunits.

The catalysed reaction is L-glutamyl-tRNA(Gln) + L-glutamine + ATP + H2O = L-glutaminyl-tRNA(Gln) + L-glutamate + ADP + phosphate + H(+). Allows the formation of correctly charged Gln-tRNA(Gln) through the transamidation of misacylated Glu-tRNA(Gln) in organisms which lack glutaminyl-tRNA synthetase. The reaction takes place in the presence of glutamine and ATP through an activated gamma-phospho-Glu-tRNA(Gln). In Treponema denticola (strain ATCC 35405 / DSM 14222 / CIP 103919 / JCM 8153 / KCTC 15104), this protein is Glutamyl-tRNA(Gln) amidotransferase subunit A.